Reading from the N-terminus, the 681-residue chain is Chaperone protein htpG (681 aa).

Residues 1–326 are a; substrate-binding; it reads MQKGNIGVTT…SPDIPLNVSR (326 aa). Residues 327–545 form a b region; the sequence is SYLQSDSNVK…YMRRMKEMAN (219 aa). The c stretch occupies residues 546 to 681; the sequence is IQAGMSFYGE…NFVKRSIELI (136 aa).

The protein belongs to the heat shock protein 90 family. Homodimer.

The protein resides in the cytoplasm. Molecular chaperone. Has ATPase activity. The protein is Chaperone protein htpG of Bacteroides fragilis (strain YCH46).